The primary structure comprises 279 residues: Large ribosomal subunit protein uL2 (279 aa).

The disordered stretch occupies residues 222 to 279 (GMAMNPVDHPMGGGEGKSKSGGGRRHPKSPWGQLAKGLKTRNKKKASQKLIVRGRNAK). The span at 232–242 (MGGGEGKSKSG) shows a compositional bias: gly residues. Over residues 259 to 268 (LKTRNKKKAS) the composition is skewed to basic residues.

It belongs to the universal ribosomal protein uL2 family. In terms of assembly, part of the 50S ribosomal subunit. Forms a bridge to the 30S subunit in the 70S ribosome.

Its function is as follows. One of the primary rRNA binding proteins. Required for association of the 30S and 50S subunits to form the 70S ribosome, for tRNA binding and peptide bond formation. It has been suggested to have peptidyltransferase activity; this is somewhat controversial. Makes several contacts with the 16S rRNA in the 70S ribosome. In Chlorobium phaeobacteroides (strain DSM 266 / SMG 266 / 2430), this protein is Large ribosomal subunit protein uL2.